The sequence spans 546 residues: MMDFGFVDSLKGASKRGKNAVIAEVKVRSPIHGDLLRGRRIEDILRAYEKAGAAAISYITAEQFSGNFETLKKIVGLTDLPVLRKDFIRGRKEVERTAEVEAAALLLIARHLKERTAEMVDFCFEHGIEPLVEVHHAEDLVYAENARAVLINNRDIDRMERDGGSIDVTAKIAEKIRAFKVSGSGIGSVEDLLFVLQYVDAALIGTAFMMAENTEEFVQTVCGGEKMIEDVLRGLDFDKAYELAKTLPELDEIKIAAVLAALEAKGYGAEVIAGFAKGVAEKSKIEIGKVMDTCGTGGDKTSSINVSTAVAIALSTVHPVAKHGNRAVSSKSGSADVLEALGVRIEMDEERARKMIAETNFAFLFAPLYHKSFARVAAVRRNLGIRTIFNVTGPLTNPARPEVQIVGVASEILLVEVAKAMSLLGRRAVVVYGSGMDEVNPNSSTDIAVVNGGVERLKLEPEDFGIERCRVLPCSSSGESAERIRAVFSGKGLKEDRRLIAINFATALFALGYEDLKENVEIFEEKVQSGELARKLEEIACKSTSM.

Positions 1-226 are indole-3-glycerol phosphate synthase; that stretch reads MMDFGFVDSL…FVQTVCGGEK (226 aa). The tract at residues 227–546 is anthranilate phosphoribosyltransferase; it reads MIEDVLRGLD…EEIACKSTSM (320 aa). 5-phospho-alpha-D-ribose 1-diphosphate is bound by residues Gly295, 298 to 299, Ser303, 305 to 308, 322 to 330, and Ser334; these read GD, NVST, and KHGNRAVSS. Gly295 lines the anthranilate pocket. Ser307 serves as a coordination point for Mg(2+). Asn325 lines the anthranilate pocket. Arg380 contacts anthranilate. Mg(2+) contacts are provided by Asp437 and Glu438.

This sequence in the N-terminal section; belongs to the TrpC family. It in the C-terminal section; belongs to the anthranilate phosphoribosyltransferase family. Mg(2+) serves as cofactor.

The enzyme catalyses 1-(2-carboxyphenylamino)-1-deoxy-D-ribulose 5-phosphate + H(+) = (1S,2R)-1-C-(indol-3-yl)glycerol 3-phosphate + CO2 + H2O. The catalysed reaction is N-(5-phospho-beta-D-ribosyl)anthranilate + diphosphate = 5-phospho-alpha-D-ribose 1-diphosphate + anthranilate. It participates in amino-acid biosynthesis; L-tryptophan biosynthesis; L-tryptophan from chorismate: step 2/5. The protein operates within amino-acid biosynthesis; L-tryptophan biosynthesis; L-tryptophan from chorismate: step 4/5. Bifunctional enzyme that catalyzes the second and fourth steps of tryptophan biosynthetic pathway. The second step is catalyzed by the anthranilate phosphoribosyltransferase, coded by the TrpD domain and the fourth step is catalyzed by indole-3-glycerol phosphate synthase, coded by the TrpC domain. The sequence is that of Tryptophan biosynthesis protein TrpCD (trpCD) from Archaeoglobus fulgidus (strain ATCC 49558 / DSM 4304 / JCM 9628 / NBRC 100126 / VC-16).